Here is a 152-residue protein sequence, read N- to C-terminus: Xanthine-guanine phosphoribosyltransferase (152 aa).

5-phospho-alpha-D-ribose 1-diphosphate-binding positions include 37-38 (RG), Arg-69, and 88-96 (DDLVDTGGT). Arg-69 is a binding site for GMP. Asp-89 serves as a coordination point for Mg(2+). Residues Asp-92 and Ile-135 each coordinate guanine. Residues Asp-92 and Ile-135 each contribute to the xanthine site. GMP-binding positions include 92-96 (DTGGT) and 134-135 (WI).

This sequence belongs to the purine/pyrimidine phosphoribosyltransferase family. XGPT subfamily. In terms of assembly, homotetramer. It depends on Mg(2+) as a cofactor.

Its subcellular location is the cell inner membrane. It catalyses the reaction GMP + diphosphate = guanine + 5-phospho-alpha-D-ribose 1-diphosphate. The catalysed reaction is XMP + diphosphate = xanthine + 5-phospho-alpha-D-ribose 1-diphosphate. The enzyme catalyses IMP + diphosphate = hypoxanthine + 5-phospho-alpha-D-ribose 1-diphosphate. It participates in purine metabolism; GMP biosynthesis via salvage pathway; GMP from guanine: step 1/1. It functions in the pathway purine metabolism; XMP biosynthesis via salvage pathway; XMP from xanthine: step 1/1. Purine salvage pathway enzyme that catalyzes the transfer of the ribosyl-5-phosphate group from 5-phospho-alpha-D-ribose 1-diphosphate (PRPP) to the N9 position of the 6-oxopurines guanine and xanthine to form the corresponding ribonucleotides GMP (guanosine 5'-monophosphate) and XMP (xanthosine 5'-monophosphate), with the release of PPi. To a lesser extent, also acts on hypoxanthine. This Edwardsiella ictaluri (strain 93-146) protein is Xanthine-guanine phosphoribosyltransferase.